Here is a 160-residue protein sequence, read N- to C-terminus: Protein cornichon homolog 3 (160 aa).

Over 1 to 10 the chain is Cytoplasmic; that stretch reads MAFTFAAFCY. A helical membrane pass occupies residues 11–31; sequence MLSLVLCAALIFFAIWHIIAF. At 32-72 the chain is on the lumenal side; that stretch reads DELRTDFKSPIDQCNPVHARERLRNIERICFLLRKLVLPEY. The helical transmembrane segment at 73 to 93 threads the bilayer; sequence SIHSLFCVMFLCAQEWLTLGL. The Cytoplasmic segment spans residues 94–138; the sequence is NVPLLFYHFWRYFHCPADSSELAYDPPVVMNADTLSYCQKEAWCK. Residues 139 to 159 traverse the membrane as a helical segment; sequence LAFYLLSFFYYLYCMIYTLVS. A topological domain (lumenal) is located at residue Ser160.

Belongs to the cornichon family. In terms of assembly, acts as an auxiliary subunit for AMPA-selective glutamate receptors (AMPARs). Found in a complex with GRIA1, GRIA2, GRIA3, GRIA4, CNIH2, CACNG2, CACNG3, CACNG4, CACNG5, CACNG7 and CACNG8. As to expression, brain. Expressed in the neocortex, hippocampal formation, and cerebellum (at protein level).

The protein resides in the postsynaptic cell membrane. In terms of biological role, regulates the trafficking and gating properties of AMPA-selective glutamate receptors (AMPARs). Promotes their targeting to the cell membrane and synapses and modulates their gating properties by regulating their rates of activation, deactivation and desensitization. The sequence is that of Protein cornichon homolog 3 (Cnih3) from Rattus norvegicus (Rat).